Reading from the N-terminus, the 405-residue chain is tRNA (uracil(54)-C(5))-methyltransferase (405 aa).

Positions 61, 67, 70, and 137 each coordinate [4Fe-4S] cluster. S-adenosyl-L-methionine-binding positions include Gln252, Tyr278, Thr283, 299–300 (DS), Asp326, and Asp340. The active-site Nucleophile is Cys367. The active-site Proton acceptor is Glu399.

Belongs to the class I-like SAM-binding methyltransferase superfamily. RNA M5U methyltransferase family.

The catalysed reaction is uridine(54) in tRNA + S-adenosyl-L-methionine = 5-methyluridine(54) in tRNA + S-adenosyl-L-homocysteine + H(+). Its activity is regulated as follows. Activated by magnesium ions. Its function is as follows. Catalyzes the formation of 5-methyl-uridine at position 54 (m5U54) in tRNA. The sequence is that of tRNA (uracil(54)-C(5))-methyltransferase from Pyrococcus abyssi (strain GE5 / Orsay).